Consider the following 1027-residue polypeptide: Xyloglucanase (1027 aa).

A signal peptide spans 1–32; sequence MKTFLGKKLWMASLAVALAAGSFAALPEMTSA. D70 acts as the Nucleophile in catalysis. 4 BNR repeats span residues 134–143, 185–196, 252–262, and 357–367; these read RSTDRGDTWQ, WRSSDYGATWSK, YRSTDGGATWT, and FRSKDGGTTWT. D479 functions as the Proton donor in the catalytic mechanism. BNR repeat units lie at residues 537–545 and 717–727; these read SSDGGTNWY and FRSDDGGASWV. Positions 876 to 1027 constitute a CBM3 domain; the sequence is PEGSIRIEMY…SGTLQWGIEP (152 aa).

The protein belongs to the glycosyl hydrolase 74 family.

Hydrolyzes the glucosidic bonds of unbranched Glc residues in tamarind seed xyloglucan, producing XXXG, XLXG, XXLG and XLLG. May have a dual endo- and exo- mode of action towards xyloglucan, or may have an endo-processive mode of action. This chain is Xyloglucanase, found in Paenibacillus sp.